A 33-amino-acid chain; its full sequence is Brevinin-2GRb (33 aa).

Expressed by the skin glands.

It is found in the secreted. In terms of biological role, antimicrobial peptide active against the Gram-positive bacterium S.aureus (MIC=25 uM) and against the Gram-negative bacteria E.coli (MIC=6 uM). Has no antifungal activity against C.albicans. Shows hemolytic activity against human erythrocytes only at high concentrations (LC(50)=180 uM). In Odorrana grahami (Yunnanfu frog), this protein is Brevinin-2GRb.